A 268-amino-acid polypeptide reads, in one-letter code: Helix-loop-helix protein 25 (268 aa).

Residues 1–23 (MPKVIQSSMSDYRSVPYNQTPKS) are compositionally biased toward polar residues. The interval 1–29 (MPKVIQSSMSDYRSVPYNQTPKSASERKR) is disordered. A basic motif region spans residues 92–105 (ERRKVKTEREKIRR). The region spanning 92-149 (ERRKVKTEREKIRRKKQDDCYAELKFFILNKQMGSYEQRLKLERITILEIIIDYIKHN) is the bHLH domain. Residues 106 to 149 (KKQDDCYAELKFFILNKQMGSYEQRLKLERITILEIIIDYIKHN) are helix-loop-helix motif.

It is found in the nucleus. In terms of biological role, probable transcription factor. Modulates lifespan and also recovery from the developmentally arrested larval state known as dauer, perhaps acting upstream of phosphatase PTEN/daf-18. Regulates expression of genes involved in cell division, cell-cycle regulation, and sexual reproduction, including daf-18. This Caenorhabditis elegans protein is Helix-loop-helix protein 25.